A 370-amino-acid polypeptide reads, in one-letter code: MSVLIKTRHCFVLLGLWLVLPTASAQPLGSLVDIQGVRGNQLVGYSLVVGLDGSGDKNQVKFTGQSMANMLRQFGVQLPEKMDPKVKNVAAVAISATLPPGYGRGQSIDITVSSIGDAKSLRGGTLLLTQLRGADGEVYALAQGNVVVGGIKAEGDSGSSVTVNTPTVGRIPNGASIERQIPSDFQTNNQVVLNLKRPSFKSANNVALALNRAFGANTATAQSATNVMVNAPQDAGARVAFMSLLEDVQINAGEQSPRVVFNARTGTVVIGEGVMVRAAAVSHGNLTVNIREQKNVSQPNPLGGGKTVTTPESDIEVTKGKNQMVMVPAGTRLRSIVNTINSLGASPDDIMAILQALYEAGALDAELVVI.

The N-terminal stretch at 1–25 is a signal peptide; sequence MSVLIKTRHCFVLLGLWLVLPTASA.

Belongs to the FlgI family. As to quaternary structure, the basal body constitutes a major portion of the flagellar organelle and consists of four rings (L,P,S, and M) mounted on a central rod.

It is found in the periplasm. It localises to the bacterial flagellum basal body. Functionally, assembles around the rod to form the L-ring and probably protects the motor/basal body from shearing forces during rotation. The sequence is that of Flagellar P-ring protein 1 from Yersinia pestis.